Reading from the N-terminus, the 185-residue chain is Elongation factor P (185 aa).

This sequence belongs to the elongation factor P family.

The protein localises to the cytoplasm. The protein operates within protein biosynthesis; polypeptide chain elongation. Its function is as follows. Involved in peptide bond synthesis. Stimulates efficient translation and peptide-bond synthesis on native or reconstituted 70S ribosomes in vitro. Probably functions indirectly by altering the affinity of the ribosome for aminoacyl-tRNA, thus increasing their reactivity as acceptors for peptidyl transferase. In Burkholderia ambifaria (strain MC40-6), this protein is Elongation factor P.